A 118-amino-acid polypeptide reads, in one-letter code: Flowering-promoting factor 1-like protein 4 (118 aa).

It belongs to the FPF1 family.

In Oryza sativa subsp. japonica (Rice), this protein is Flowering-promoting factor 1-like protein 4.